Consider the following 99-residue polypeptide: UPF0235 protein Cag_0319 (99 aa).

The protein belongs to the UPF0235 family.

The chain is UPF0235 protein Cag_0319 from Chlorobium chlorochromatii (strain CaD3).